The following is a 730-amino-acid chain: Dual function macrocyclase-peptidase POPB (730 aa).

A disordered region spans residues 1-34; sequence MSSVTWAPGNYPSTRRSDHVDTYQSASKGEVPVP. Catalysis depends on charge relay system residues serine 577, aspartate 661, and histidine 698.

The protein belongs to the peptidase S9A family. In terms of assembly, monomer.

It catalyses the reaction Hydrolysis of Pro-|-Xaa &gt;&gt; Ala-|-Xaa in oligopeptides.. Dual function macrocyclase-peptidase involved in the biosynthesis of the highly toxic amanitin toxin family of macrocycles. Cleaves peptide bonds on the C-terminal side of prolyl residues. The enzyme first removes 10 residues from the N-terminus of a 35-residue substrate. Conformational trapping of the 25 amino-acid peptide forces the enzyme to release this intermediate rather than proceed to macrocyclization. The enzyme rebinds the 25 amino-acid peptide in a different conformation and catalyzes macrocyclization of the N-terminal eight residues. This is Dual function macrocyclase-peptidase POPB from Galerina marginata (strain CBS 339.88).